Consider the following 551-residue polypeptide: Preprotein translocase subunit SCY1, chloroplastic (551 aa).

A chloroplast-targeting transit peptide spans Met-1–Arg-67. Transmembrane regions (helical) follow at residues Phe-142 to Gly-162, Leu-192 to Leu-212, Ala-241 to Val-261, Trp-268 to Glu-288, Leu-295 to Phe-315, Tyr-328 to Val-348, Ser-382 to Ala-402, Phe-415 to Phe-435, Val-482 to Thr-502, and His-503 to Thr-523.

This sequence belongs to the SecY/SEC61-alpha family. Part of the Sec protein translocation apparatus. Interacts with SECE1, ALB3 and probably with SECA1.

The protein resides in the plastid. Its subcellular location is the chloroplast thylakoid membrane. Its function is as follows. Involved in protein export. Probably interacts with other proteins to allow the translocation of proteins across the chloroplast thylakoid membranes. Required for normal greening during embryogenesis. Central subunit of the protein translocation channel SecYE. Consists of two halves formed by TMs 1-5 and 6-10. These two domains form a lateral gate at the front which open onto the bilayer between TMs 2 and 7, and are clamped together by SecE at the back. The channel is closed by both a pore ring composed of hydrophobic SecY resides and a short helix (helix 2A) on the extracellular side of the membrane which forms a plug. This is Preprotein translocase subunit SCY1, chloroplastic (SCY1) from Arabidopsis thaliana (Mouse-ear cress).